Consider the following 361-residue polypeptide: Deoxyribonuclease-2-beta (361 aa).

The signal sequence occupies residues 1–27 (MKQKMMARLLRTSFALLFLGLFGVLGA). N-linked (GlcNAc...) asparagine glycosylation is found at asparagine 81, asparagine 103, asparagine 119, and asparagine 278.

This sequence belongs to the DNase II family. Highly expressed in the eye lens and in salivary gland. Detected at lower levels in lung, prostate and lymph node. Isoform 2 is lung specific.

The protein resides in the lysosome. The enzyme catalyses Endonucleolytic cleavage to nucleoside 3'-phosphates and 3'-phosphooligonucleotide end-products.. Its function is as follows. Hydrolyzes DNA under acidic conditions. Does not require divalent cations for activity. Participates in the degradation of nuclear DNA during lens cell differentiation. This is Deoxyribonuclease-2-beta (DNASE2B) from Homo sapiens (Human).